We begin with the raw amino-acid sequence, 247 residues long: Mycofactocin precursor peptide peptidase (247 aa).

A divalent metal cation-binding residues include E38, H40, D49, H124, and E163.

It belongs to the creatininase superfamily. In terms of assembly, homooctamer. Fe(2+) is required as a cofactor. It depends on Zn(2+) as a cofactor.

The enzyme catalyses [mycofactocin precursor peptide]-C-terminal glycyl-N-{5-[(4-hydroxyphenyl)methyl]-4,4-dimethyl-2-oxopyrrolidin-3-yl}acetamide + H2O = [mycofactocin precursor peptide]-C-terminal glycine + 3-amino-5-[(4-hydroxyphenyl)methyl]-4,4-dimethyl-2-pyrrolidin-2-one. Functionally, peptidase involved in the biosynthesis of the enzyme cofactor mycofactocin (MFT). Catalyzes cleavage of the MftC-modified MftA peptide to liberate its final two residues, which consist of a cross-linked valine-decarboxylated tyrosine dipeptide (named 3-amino-5-[(4-hydroxyphenyl)methyl]-4,4-dimethyl-2-pyrrolidin-2-one or ADHP). Is required for the in vivo ethanol assimilation in M.smegmatis. This chain is Mycofactocin precursor peptide peptidase, found in Mycolicibacterium smegmatis (strain ATCC 700084 / mc(2)155) (Mycobacterium smegmatis).